The following is an 835-amino-acid chain: Lon protease (835 aa).

A Lon N-terminal domain is found at 4–224; that stretch reads LPYIAIRNQL…LAINMLINAI (221 aa). 412–419 provides a ligand contact to ATP; that stretch reads GPPGTGKT. The 184-residue stretch at 649 to 832 folds into the Lon proteolytic domain; that stretch reads QPKAGVVNAL…DEIFKYIFEA (184 aa). Catalysis depends on residues S738 and K781.

Belongs to the peptidase S16 family. In terms of assembly, homohexamer. Organized in a ring with a central cavity.

It localises to the cytoplasm. The catalysed reaction is Hydrolysis of proteins in presence of ATP.. In terms of biological role, ATP-dependent serine protease that mediates the selective degradation of mutant and abnormal proteins as well as certain short-lived regulatory proteins. Required for cellular homeostasis and for survival from DNA damage and developmental changes induced by stress. Degrades polypeptides processively to yield small peptide fragments that are 5 to 10 amino acids long. Binds to DNA in a double-stranded, site-specific manner. The sequence is that of Lon protease from Metamycoplasma arthritidis (strain 158L3-1) (Mycoplasma arthritidis).